The primary structure comprises 741 residues: Cytosolic phospholipase A2 (741 aa).

The region spanning 1–116 (MSNIIVEHQY…KVAQMEHVTL (116 aa)) is the C2 domain. Residues 1–172 (MSNIIVEHQY…IKKLLKMENP (172 aa)) are phospholipid binding. Ca(2+) is bound by residues Asp-34, Thr-35, Asp-37, Asn-59, Asp-87, Ala-88, and Asn-89. In terms of domain architecture, PLA2c spans 132 to 729 (VCASTDLRFS…SLSEIENKKF (598 aa)). The active-site Nucleophile is the Ser-223. Residues 406-453 (TSSSTMEEELEQIKPEHIVGDDSADNEEETQRGGTESADAEDERQRHA) form a disordered region. Positions 416–425 (EQIKPEHIVG) are enriched in basic and acidic residues. Phosphoserine; by MAPK is present on Ser-498. Residue Asp-540 is the Proton acceptor of the active site.

In terms of processing, activated by phosphorylation on a serine residue.

It localises to the cytoplasm. The protein resides in the cytoplasmic vesicle. The catalysed reaction is a 1,2-diacyl-sn-glycero-3-phosphocholine + H2O = a 1-acyl-sn-glycero-3-phosphocholine + a fatty acid + H(+). It catalyses the reaction a 1-acyl-sn-glycero-3-phosphocholine + H2O = sn-glycerol 3-phosphocholine + a fatty acid + H(+). Stimulated by agonists such as ATP, EGF, thrombin and bradykinin as well as by cytosolic Ca(2+). In terms of biological role, selectively hydrolyzes arachidonyl phospholipids in the sn-2 position releasing arachidonic acid. Together with its lysophospholipid activity, it is implicated in the initiation of the inflammatory response. This Danio rerio (Zebrafish) protein is Cytosolic phospholipase A2 (pla2g4a).